Here is a 126-residue protein sequence, read N- to C-terminus: Ribosome-binding factor A (126 aa).

This sequence belongs to the RbfA family. As to quaternary structure, monomer. Binds 30S ribosomal subunits, but not 50S ribosomal subunits or 70S ribosomes.

The protein localises to the cytoplasm. In terms of biological role, one of several proteins that assist in the late maturation steps of the functional core of the 30S ribosomal subunit. Associates with free 30S ribosomal subunits (but not with 30S subunits that are part of 70S ribosomes or polysomes). Required for efficient processing of 16S rRNA. May interact with the 5'-terminal helix region of 16S rRNA. The polypeptide is Ribosome-binding factor A (Nitrosospira multiformis (strain ATCC 25196 / NCIMB 11849 / C 71)).